We begin with the raw amino-acid sequence, 190 residues long: Elongation factor P-like protein (190 aa).

It belongs to the elongation factor P family.

This is Elongation factor P-like protein from Pseudoalteromonas atlantica (strain T6c / ATCC BAA-1087).